The following is a 276-amino-acid chain: Large ribosomal subunit protein uL2c (276 aa).

A disordered region spans residues valine 223–alanine 254.

This sequence belongs to the universal ribosomal protein uL2 family. Part of the 50S ribosomal subunit.

Its subcellular location is the plastid. It localises to the chloroplast. This Emiliania huxleyi (Coccolithophore) protein is Large ribosomal subunit protein uL2c (rpl2).